Here is a 245-residue protein sequence, read N- to C-terminus: Pyridoxine 5'-phosphate synthase (245 aa).

N7 contacts 3-amino-2-oxopropyl phosphate. Position 9–10 (9–10) interacts with 1-deoxy-D-xylulose 5-phosphate; it reads DH. R18 serves as a coordination point for 3-amino-2-oxopropyl phosphate. The active-site Proton acceptor is H43. 1-deoxy-D-xylulose 5-phosphate-binding residues include R45 and H50. The active-site Proton acceptor is E70. T100 is a 1-deoxy-D-xylulose 5-phosphate binding site. Residue H190 is the Proton donor of the active site. 3-amino-2-oxopropyl phosphate-binding positions include G191 and 212–213; that span reads GH.

It belongs to the PNP synthase family. Homooctamer; tetramer of dimers.

It is found in the cytoplasm. The catalysed reaction is 3-amino-2-oxopropyl phosphate + 1-deoxy-D-xylulose 5-phosphate = pyridoxine 5'-phosphate + phosphate + 2 H2O + H(+). The protein operates within cofactor biosynthesis; pyridoxine 5'-phosphate biosynthesis; pyridoxine 5'-phosphate from D-erythrose 4-phosphate: step 5/5. Catalyzes the complicated ring closure reaction between the two acyclic compounds 1-deoxy-D-xylulose-5-phosphate (DXP) and 3-amino-2-oxopropyl phosphate (1-amino-acetone-3-phosphate or AAP) to form pyridoxine 5'-phosphate (PNP) and inorganic phosphate. The polypeptide is Pyridoxine 5'-phosphate synthase (Prochlorococcus marinus (strain MIT 9313)).